The primary structure comprises 445 residues: Phosphoglucosamine mutase (445 aa).

Residue serine 99 is the Phosphoserine intermediate of the active site. Mg(2+)-binding residues include serine 99, aspartate 242, aspartate 244, and aspartate 246. At serine 99 the chain carries Phosphoserine.

Belongs to the phosphohexose mutase family. Mg(2+) is required as a cofactor. Activated by phosphorylation.

The catalysed reaction is alpha-D-glucosamine 1-phosphate = D-glucosamine 6-phosphate. Functionally, catalyzes the conversion of glucosamine-6-phosphate to glucosamine-1-phosphate. The chain is Phosphoglucosamine mutase from Nitratiruptor sp. (strain SB155-2).